A 162-amino-acid chain; its full sequence is RNA pyrophosphohydrolase (162 aa).

In terms of domain architecture, Nudix hydrolase spans 11–155; sequence PYRPCVGIVL…KRAVYEEVVA (145 aa). A Nudix box motif is present at residues 45-66; it reads GGIDEGEKPREAALRELWEETG.

This sequence belongs to the Nudix hydrolase family. RppH subfamily. A divalent metal cation serves as cofactor.

Functionally, accelerates the degradation of transcripts by removing pyrophosphate from the 5'-end of triphosphorylated RNA, leading to a more labile monophosphorylated state that can stimulate subsequent ribonuclease cleavage. In Cereibacter sphaeroides (strain ATCC 17023 / DSM 158 / JCM 6121 / CCUG 31486 / LMG 2827 / NBRC 12203 / NCIMB 8253 / ATH 2.4.1.) (Rhodobacter sphaeroides), this protein is RNA pyrophosphohydrolase.